Here is a 138-residue protein sequence, read N- to C-terminus: Small ribosomal subunit protein uS11B (138 aa).

The tract at residues 118 to 138 is disordered; the sequence is DVTPVPSDSTRKKGGRRGRRL. Residues 129–138 show a composition bias toward basic residues; the sequence is KKGGRRGRRL.

Belongs to the universal ribosomal protein uS11 family. In terms of assembly, component of the small ribosomal subunit (SSU). Mature yeast ribosomes consist of a small (40S) and a large (60S) subunit. The 40S small subunit contains 1 molecule of ribosomal RNA (18S rRNA) and 33 different proteins (encoded by 57 genes). The large 60S subunit contains 3 rRNA molecules (25S, 5.8S and 5S rRNA) and 46 different proteins (encoded by 81 genes). uS11 interacts with eS1 forming part of the mRNA exit tunnel. uS11 interacts with snoRNA U3. uS11 interacts with MPP10. Component of the ribosomal small subunit (SSU) processome composed of at least 40 protein subunits and snoRNA U3.

The protein localises to the cytoplasm. The protein resides in the nucleus. It is found in the nucleolus. Component of the ribosome, a large ribonucleoprotein complex responsible for the synthesis of proteins in the cell. The small ribosomal subunit (SSU) binds messenger RNAs (mRNAs) and translates the encoded message by selecting cognate aminoacyl-transfer RNA (tRNA) molecules. The large subunit (LSU) contains the ribosomal catalytic site termed the peptidyl transferase center (PTC), which catalyzes the formation of peptide bonds, thereby polymerizing the amino acids delivered by tRNAs into a polypeptide chain. The nascent polypeptides leave the ribosome through a tunnel in the LSU and interact with protein factors that function in enzymatic processing, targeting, and the membrane insertion of nascent chains at the exit of the ribosomal tunnel. uS11 is involved in nucleolar processing of pre-18S ribosomal RNA and ribosome assembly. This chain is Small ribosomal subunit protein uS11B, found in Saccharomyces cerevisiae (strain ATCC 204508 / S288c) (Baker's yeast).